The sequence spans 343 residues: MGETVTIQKNWQELIRPNKLQVTPGSDPARFATIVAEPLERGFGQTLGNALRRILLSSLQGAAVQSVHIDGVLHEFSSIAGVREDVTDIVLNIKDISIKMQGEGPKRMVVKKQGPGVVTAGDIQTVGDVVVLNPDLQICTLDEGAEIRMEFTVATGKGYVPAERNRPEDAPIGLIPVDSLYSPVRKVSYKVENTREGQILDYDKLTMTIETNGAISPDDSVAYAARILQDQLNVFVNFEEPRKEVAQEIIPDLAFNPAFLKKVDELELSVRSANCLKNDNIVYIGDLVQKSEAEMLRTPNFGRKSLNEIKEVLAQMGLHLGMEVPGWPPENIDELAKRFEDHY.

The tract at residues 1–239 (MGETVTIQKN…DQLNVFVNFE (239 aa)) is alpha N-terminal domain (alpha-NTD). The interval 255-343 (FNPAFLKKVD…ELAKRFEDHY (89 aa)) is alpha C-terminal domain (alpha-CTD).

This sequence belongs to the RNA polymerase alpha chain family. In terms of assembly, homodimer. The RNAP catalytic core consists of 2 alpha, 1 beta, 1 beta' and 1 omega subunit. When a sigma factor is associated with the core the holoenzyme is formed, which can initiate transcription.

It catalyses the reaction RNA(n) + a ribonucleoside 5'-triphosphate = RNA(n+1) + diphosphate. Its function is as follows. DNA-dependent RNA polymerase catalyzes the transcription of DNA into RNA using the four ribonucleoside triphosphates as substrates. The protein is DNA-directed RNA polymerase subunit alpha of Bradyrhizobium diazoefficiens (strain JCM 10833 / BCRC 13528 / IAM 13628 / NBRC 14792 / USDA 110).